The sequence spans 331 residues: MALTDRLLDAWYKGHPALTLLRPLESLYRRVVDGKRAKFLAGEGDIYRAPVPVIVVGNITIGGTGKTPLILWMIEHCQRKGLRVGVVSRGYGAKPPSLPWRVQPDQSASEAGDEPLLIVQRSGVPLMIDPDRSRAVQALLAAEPLDLILSDDGLQHYRLARDLELVLIDAARGLGNRRCLPAGPLREPVERLSSVDALLYNGATADRDDGYAFTLKPSALINLRSGERQPVSYFPAGQALHAVAGIGNPQRFFNTLEGLHWRPVTHAFADHALYSVQALTFTPALPLVMTEKDAVKCRAFAADDWWYLAVDAVPSDAFVGWFDEQLLRLSP.

ATP is bound at residue 60-67 (TIGGTGKT).

This sequence belongs to the LpxK family.

The enzyme catalyses a lipid A disaccharide + ATP = a lipid IVA + ADP + H(+). It functions in the pathway glycolipid biosynthesis; lipid IV(A) biosynthesis; lipid IV(A) from (3R)-3-hydroxytetradecanoyl-[acyl-carrier-protein] and UDP-N-acetyl-alpha-D-glucosamine: step 6/6. Functionally, transfers the gamma-phosphate of ATP to the 4'-position of a tetraacyldisaccharide 1-phosphate intermediate (termed DS-1-P) to form tetraacyldisaccharide 1,4'-bis-phosphate (lipid IVA). The chain is Tetraacyldisaccharide 4'-kinase from Pseudomonas syringae pv. tomato (strain ATCC BAA-871 / DC3000).